Consider the following 386-residue polypeptide: Succinate--CoA ligase [ADP-forming] subunit beta (386 aa).

ATP-binding residues include lysine 46, glutamate 99, alanine 102, and glutamate 107. Mg(2+)-binding residues include asparagine 199 and aspartate 213. Substrate-binding positions include asparagine 264 and 321–323 (GIM).

Belongs to the succinate/malate CoA ligase beta subunit family. In terms of assembly, heterotetramer of two alpha and two beta subunits. Mg(2+) serves as cofactor.

It carries out the reaction succinate + ATP + CoA = succinyl-CoA + ADP + phosphate. The enzyme catalyses GTP + succinate + CoA = succinyl-CoA + GDP + phosphate. Its pathway is carbohydrate metabolism; tricarboxylic acid cycle; succinate from succinyl-CoA (ligase route): step 1/1. Functionally, succinyl-CoA synthetase functions in the citric acid cycle (TCA), coupling the hydrolysis of succinyl-CoA to the synthesis of either ATP or GTP and thus represents the only step of substrate-level phosphorylation in the TCA. The beta subunit provides nucleotide specificity of the enzyme and binds the substrate succinate, while the binding sites for coenzyme A and phosphate are found in the alpha subunit. The polypeptide is Succinate--CoA ligase [ADP-forming] subunit beta (Orientia tsutsugamushi (strain Ikeda) (Rickettsia tsutsugamushi)).